Consider the following 107-residue polypeptide: Nucleoid-associated protein PPA0205 (107 aa).

It belongs to the YbaB/EbfC family. As to quaternary structure, homodimer.

The protein resides in the cytoplasm. Its subcellular location is the nucleoid. In terms of biological role, binds to DNA and alters its conformation. May be involved in regulation of gene expression, nucleoid organization and DNA protection. The sequence is that of Nucleoid-associated protein PPA0205 from Cutibacterium acnes (strain DSM 16379 / KPA171202) (Propionibacterium acnes).